The primary structure comprises 235 residues: Transmembrane emp24 domain-containing protein 9 (235 aa).

Residues 1-37 (MAVELGVLLVRPRPGTGLGRVMRTLLLVLWLATRGSA) form the signal peptide. Residues 38-202 (LYFHIGETEK…RQTSESTNQR (165 aa)) are Lumenal-facing. One can recognise a GOLD domain in the interval 47 to 145 (KKCFIEEIPD…MLRVHLDIQV (99 aa)). The interval 121 to 160 (CLHSNSTKFSLFAGGMLRVHLDIQVGEHANDYAEIAAKDK) is required for interaction with STX17. The N-linked (GlcNAc...) asparagine glycan is linked to N125. Residues 154 to 184 (EIAAKDKLSELQLRVRQLVEQVEQIQKEQNY) are a coiled coil. K160 is subject to N6-acetyllysine. Residues 203-222 (VLWWSILQTLILVAIGVWQM) traverse the membrane as a helical segment. The Cytoplasmic segment spans residues 223-235 (RHLKSFFEAKKLV). The short motif at 228-229 (FF) is the COPII vesicle coat-binding element. Residues 228 to 235 (FFEAKKLV) carry the COPI vesicle coat-binding motif.

This sequence belongs to the EMP24/GP25L family. In terms of assembly, monomer and homodimer in endoplasmic reticulum. Predominantly monomeric and to lesser extent homodimeric in endoplasmic reticulum-Golgi intermediate compartment and cis-Golgi network. Probably oligomerizes with other members of the EMP24/GP25L family such as TMED2, TMED7 and TMED10. Interacts with TMED5. Interacts (via C-terminus) with COPG1; the interaction involves dimeric TMED9. Interacts with PTPN2 and SPAST. Interacts with STX17; the interaction is direct. In terms of processing, N-linked glycosylated containing high mannose.

The protein localises to the endoplasmic reticulum membrane. Its subcellular location is the golgi apparatus. The protein resides in the cis-Golgi network membrane. It localises to the endoplasmic reticulum-Golgi intermediate compartment membrane. It is found in the trans-Golgi network membrane. Functionally, appears to be involved in vesicular protein trafficking, mainly in the early secretory pathway. In COPI vesicle-mediated retrograde transport involved in the coatomer recruitment to membranes of the early secretory pathway. Increases coatomer-dependent activity of ARFGAP2. Thought to play a crucial role in the specific retention of p24 complexes in cis-Golgi membranes; specifically contributes to the coupled localization of TMED2 and TMED10 in the cis-Golgi network. May be involved in organization of intracellular membranes, such as of the ER-Golgi intermediate compartment and the Golgi apparatus. Involved in ER localization of PTPN2 isoform PTPB. This chain is Transmembrane emp24 domain-containing protein 9 (TMED9), found in Homo sapiens (Human).